Here is a 568-residue protein sequence, read N- to C-terminus: PTS system lactose-specific EIICB component (568 aa).

The PTS EIIC type-3 domain maps to leucine 7 to phenylalanine 409. 9 helical membrane passes run glycine 30 to valine 50, isoleucine 62 to glycine 82, isoleucine 103 to proline 123, glycine 128 to valine 148, phenylalanine 183 to valine 203, glycine 222 to histidine 242, phenylalanine 283 to isoleucine 303, isoleucine 339 to valine 359, and valine 389 to phenylalanine 409. In terms of domain architecture, PTS EIIB type-3 spans glutamate 466–aspartate 568. The active-site Phosphocysteine intermediate; for EIIB activity is cysteine 473. Position 473 is a phosphocysteine; by EIIA (cysteine 473).

It localises to the cell membrane. The catalysed reaction is lactose(out) + N(pros)-phospho-L-histidyl-[protein] = lactose 6-phosphate(in) + L-histidyl-[protein]. The phosphoenolpyruvate-dependent sugar phosphotransferase system (sugar PTS), a major carbohydrate active transport system, catalyzes the phosphorylation of incoming sugar substrates concomitantly with their translocation across the cell membrane. The enzyme II LacEF PTS system is involved in lactose transport. The sequence is that of PTS system lactose-specific EIICB component from Lactococcus lactis subsp. lactis (Streptococcus lactis).